The following is a 38-amino-acid chain: Large ribosomal subunit protein bL36 (38 aa).

This sequence belongs to the bacterial ribosomal protein bL36 family.

This is Large ribosomal subunit protein bL36 from Lacticaseibacillus casei (strain BL23) (Lactobacillus casei).